The primary structure comprises 182 residues: Ribosome-recycling factor (182 aa).

This sequence belongs to the RRF family.

The protein localises to the cytoplasm. Responsible for the release of ribosomes from messenger RNA at the termination of protein biosynthesis. May increase the efficiency of translation by recycling ribosomes from one round of translation to another. In Picosynechococcus sp. (strain ATCC 27264 / PCC 7002 / PR-6) (Agmenellum quadruplicatum), this protein is Ribosome-recycling factor.